Reading from the N-terminus, the 316-residue chain is Transaldolase (316 aa).

Catalysis depends on Lys131, which acts as the Schiff-base intermediate with substrate.

This sequence belongs to the transaldolase family. Type 1 subfamily. Homodimer.

The protein resides in the cytoplasm. The catalysed reaction is D-sedoheptulose 7-phosphate + D-glyceraldehyde 3-phosphate = D-erythrose 4-phosphate + beta-D-fructose 6-phosphate. The protein operates within carbohydrate degradation; pentose phosphate pathway; D-glyceraldehyde 3-phosphate and beta-D-fructose 6-phosphate from D-ribose 5-phosphate and D-xylulose 5-phosphate (non-oxidative stage): step 2/3. Functionally, transaldolase is important for the balance of metabolites in the pentose-phosphate pathway. The chain is Transaldolase from Chromohalobacter salexigens (strain ATCC BAA-138 / DSM 3043 / CIP 106854 / NCIMB 13768 / 1H11).